The following is a 372-amino-acid chain: MNPILSSLFALSLLSSLSPSTHAHQCHFPAIFNFGDSNSDTGGLSAAFGQAGPPHGSSFFGSPAGRYCDGRLVIDFIAESLGLPYLSAFLDSVGSNFSHGANFATAGSPIRALNSTLRQSGFSPFSLDVQFVQFYNFHNRSQTVRSRGGVYKTMLPESDSFSKALYTFDIGQNDLTAGYFANKTVEQVETEVPEIISQFMNAIKNIYGQGGRYFWIHNTGPIGCLAYVIERFPNKASDFDSHGCVSPLNHLAQQFNHALKQAVIELRSSLSEAAITYVDVYSLKHELFVHAQGHGFKGSLVSCCGHGGKYNYNKGIGCGMKKIVKGKEVYIGKPCDEPDKAVVWDGVHFTQAANKFIFDKIAPGLSKACKRQ.

A signal peptide spans 1-23 (MNPILSSLFALSLLSSLSPSTHA). The Nucleophile role is filled by S37. N-linked (GlcNAc...) asparagine glycosylation is found at N96, N114, N139, and N182. Active-site residues include D345 and H348.

The protein belongs to the 'GDSL' lipolytic enzyme family. In terms of tissue distribution, high expression in younger leaves and in the apical region of the inflorescence stem.

The protein localises to the secreted. Its subcellular location is the extracellular space. The protein resides in the apoplast. It catalyses the reaction an alpha-L-fucoside + H2O = L-fucose + an alcohol. Functionally, hydrolyzes alpha-1,2-linked fucose. Also active on fucosylated xyloglucan oligosaccharides. This chain is Alpha-L-fucosidase 3 (FXG1), found in Arabidopsis thaliana (Mouse-ear cress).